Reading from the N-terminus, the 469-residue chain is Argininosuccinate lyase (469 aa).

It belongs to the lyase 1 family. Argininosuccinate lyase subfamily.

It localises to the cytoplasm. The enzyme catalyses 2-(N(omega)-L-arginino)succinate = fumarate + L-arginine. The protein operates within amino-acid biosynthesis; L-arginine biosynthesis; L-arginine from L-ornithine and carbamoyl phosphate: step 3/3. This Burkholderia lata (strain ATCC 17760 / DSM 23089 / LMG 22485 / NCIMB 9086 / R18194 / 383) protein is Argininosuccinate lyase.